The following is a 408-amino-acid chain: Argininosuccinate synthase (408 aa).

Residues 12-20 (AYSGGLDTS) and alanine 39 contribute to the ATP site. L-citrulline contacts are provided by tyrosine 92 and serine 97. Glycine 122 is a binding site for ATP. L-aspartate is bound by residues threonine 124, asparagine 128, and aspartate 129. Asparagine 128 lines the L-citrulline pocket. The L-citrulline site is built by arginine 132, serine 183, serine 192, glutamate 268, and tyrosine 280.

It belongs to the argininosuccinate synthase family. Type 1 subfamily. As to quaternary structure, homotetramer.

Its subcellular location is the cytoplasm. It carries out the reaction L-citrulline + L-aspartate + ATP = 2-(N(omega)-L-arginino)succinate + AMP + diphosphate + H(+). The protein operates within amino-acid biosynthesis; L-arginine biosynthesis; L-arginine from L-ornithine and carbamoyl phosphate: step 2/3. The polypeptide is Argininosuccinate synthase (Caulobacter vibrioides (strain ATCC 19089 / CIP 103742 / CB 15) (Caulobacter crescentus)).